A 117-amino-acid chain; its full sequence is MVQRLTYRRRLSYNTASNKTRLSRTPGNRIVYLYTKKVGKAPKSACGVCPGRLRGVRAVRPKVLMRLSKTQKHVSRAYGGSMCAKCVRDRIKRAFLIEEQKIVVKVLKAQAQSQKAK.

A Phosphoserine modification is found at S12. N6-acetyllysine occurs at positions 36 and 43. Residue K108 forms a Glycyl lysine isopeptide (Lys-Gly) (interchain with G-Cter in SUMO2) linkage.

It belongs to the eukaryotic ribosomal protein eL34 family. In terms of assembly, component of the large ribosomal subunit.

Its subcellular location is the cytoplasm. It localises to the cytosol. It is found in the endoplasmic reticulum. Component of the large ribosomal subunit. The ribosome is a large ribonucleoprotein complex responsible for the synthesis of proteins in the cell. This Mus musculus (Mouse) protein is Large ribosomal subunit protein eL34 (Rpl34).